Here is a 480-residue protein sequence, read N- to C-terminus: UDP-N-acetylmuramate--L-alanine ligase (480 aa).

122–128 (GTHGKTT) provides a ligand contact to ATP.

Belongs to the MurCDEF family.

It is found in the cytoplasm. It catalyses the reaction UDP-N-acetyl-alpha-D-muramate + L-alanine + ATP = UDP-N-acetyl-alpha-D-muramoyl-L-alanine + ADP + phosphate + H(+). It functions in the pathway cell wall biogenesis; peptidoglycan biosynthesis. In terms of biological role, cell wall formation. The chain is UDP-N-acetylmuramate--L-alanine ligase from Pseudomonas paraeruginosa (strain DSM 24068 / PA7) (Pseudomonas aeruginosa (strain PA7)).